Reading from the N-terminus, the 292-residue chain is Small ribosomal subunit biogenesis GTPase RsgA (292 aa).

The region spanning 64–221 is the CP-type G domain; that stretch reads RSELFRPAVA…LVDTPGFSSL (158 aa). GTP is bound by residues 113-116 and 164-172; these read NKMD and GPSGVGKST. The Zn(2+) site is built by Cys-245, Cys-250, His-252, and Cys-258.

The protein belongs to the TRAFAC class YlqF/YawG GTPase family. RsgA subfamily. Monomer. Associates with 30S ribosomal subunit, binds 16S rRNA. Zn(2+) serves as cofactor.

Its subcellular location is the cytoplasm. One of several proteins that assist in the late maturation steps of the functional core of the 30S ribosomal subunit. Helps release RbfA from mature subunits. May play a role in the assembly of ribosomal proteins into the subunit. Circularly permuted GTPase that catalyzes slow GTP hydrolysis, GTPase activity is stimulated by the 30S ribosomal subunit. This is Small ribosomal subunit biogenesis GTPase RsgA from Clostridium botulinum (strain Okra / Type B1).